We begin with the raw amino-acid sequence, 526 residues long: Bifunctional purine biosynthesis protein PurH (526 aa).

The 147-residue stretch at 1–147 (MTKIERALIS…KNWAHVAIVT (147 aa)) folds into the MGS-like domain.

This sequence belongs to the PurH family.

The catalysed reaction is (6R)-10-formyltetrahydrofolate + 5-amino-1-(5-phospho-beta-D-ribosyl)imidazole-4-carboxamide = 5-formamido-1-(5-phospho-D-ribosyl)imidazole-4-carboxamide + (6S)-5,6,7,8-tetrahydrofolate. It carries out the reaction IMP + H2O = 5-formamido-1-(5-phospho-D-ribosyl)imidazole-4-carboxamide. The protein operates within purine metabolism; IMP biosynthesis via de novo pathway; 5-formamido-1-(5-phospho-D-ribosyl)imidazole-4-carboxamide from 5-amino-1-(5-phospho-D-ribosyl)imidazole-4-carboxamide (10-formyl THF route): step 1/1. It functions in the pathway purine metabolism; IMP biosynthesis via de novo pathway; IMP from 5-formamido-1-(5-phospho-D-ribosyl)imidazole-4-carboxamide: step 1/1. The sequence is that of Bifunctional purine biosynthesis protein PurH from Laribacter hongkongensis (strain HLHK9).